The following is a 507-amino-acid chain: ATP synthase subunit alpha, chloroplastic (507 aa).

170 to 177 (GDRQTGKT) lines the ATP pocket.

The protein belongs to the ATPase alpha/beta chains family. In terms of assembly, F-type ATPases have 2 components, CF(1) - the catalytic core - and CF(0) - the membrane proton channel. CF(1) has five subunits: alpha(3), beta(3), gamma(1), delta(1), epsilon(1). CF(0) has four main subunits: a, b, b' and c.

Its subcellular location is the plastid. It localises to the chloroplast thylakoid membrane. It carries out the reaction ATP + H2O + 4 H(+)(in) = ADP + phosphate + 5 H(+)(out). Produces ATP from ADP in the presence of a proton gradient across the membrane. The alpha chain is a regulatory subunit. This chain is ATP synthase subunit alpha, chloroplastic, found in Nicotiana tabacum (Common tobacco).